The following is a 501-amino-acid chain: Isoflavone 3'-hydroxylase (501 aa).

A helical transmembrane segment spans residues 7 to 24; that stretch reads LLSLSFIITIKILLKITS. Cysteine 439 lines the heme pocket.

The protein belongs to the cytochrome P450 family. Requires heme as cofactor. In terms of tissue distribution, expressed constitutively in leaves and stems, but not in roots.

The protein localises to the endoplasmic reticulum membrane. The enzyme catalyses formononetin + reduced [NADPH--hemoprotein reductase] + O2 = calycosin + oxidized [NADPH--hemoprotein reductase] + H2O + H(+). Functionally, involved in the biosynthesis of the pterocarpin phytoalexins. Acts on isoflavones with a 4'-methoxy group on the B-ring, such as biochanin A, formononetin and 2'-hydroxyformononetin. Has a low activity with daidzein and pseudobaptigenin, and no activity with the 7-O-methylated isoflavonoids isoformononetin and prunetin. This is Isoflavone 3'-hydroxylase from Medicago truncatula (Barrel medic).